Consider the following 299-residue polypeptide: GTPase Era (299 aa).

An Era-type G domain is found at 5-172; the sequence is KSGFVSIIGR…IDVLKSFLPE (168 aa). A G1 region spans residues 13–20; it reads GRPNVGKS. 13 to 20 contacts GTP; that stretch reads GRPNVGKS. The tract at residues 39 to 43 is G2; the sequence is QTTRN. Residues 60–63 form a G3 region; that stretch reads DTPG. GTP-binding positions include 60–64 and 122–125; these read DTPGI and NKID. The interval 122–125 is G4; that stretch reads NKID. Residues 151-153 form a G5 region; it reads ISA. The region spanning 203–280 is the KH type-2 domain; it reads TSEEIPHAIG…YLELWVKVQR (78 aa).

The protein belongs to the TRAFAC class TrmE-Era-EngA-EngB-Septin-like GTPase superfamily. Era GTPase family. Monomer.

It is found in the cytoplasm. It localises to the cell membrane. Functionally, an essential GTPase that binds both GDP and GTP, with rapid nucleotide exchange. Plays a role in 16S rRNA processing and 30S ribosomal subunit biogenesis and possibly also in cell cycle regulation and energy metabolism. The protein is GTPase Era of Staphylococcus epidermidis (strain ATCC 35984 / DSM 28319 / BCRC 17069 / CCUG 31568 / BM 3577 / RP62A).